Reading from the N-terminus, the 306-residue chain is MLQGRNLIDPMDFSVEELEEVFSLADKIIENPKKYSKVCEGKLLATLFYEPSTRTRLSFEAAMLRLGGKVLGFSDANCSSVSKGESLEDTIKIVSGYTDVIAIRHPKEGAAEVASKHSYVPIINAGDGGHQHPTQTLTDLLTIRRIKGDFSNHTIGLCGDLKFGRTVHSLVKALSRYENNKFILISPKELKIPDYIKEFLNERNIEFKEVDKLEDVIGELDILYMTRVQKERFEDKEEYIRLKDTYVLDKEKMNVAKEDMMVLHPLPRVNEISTNVDDDKRACYFKQARFGMFVRMALIAKVLGVE.

Positions 54 and 55 each coordinate carbamoyl phosphate. An L-aspartate-binding site is contributed by K83. Residues R104, H132, and Q135 each contribute to the carbamoyl phosphate site. Residues R165 and R227 each contribute to the L-aspartate site. Residues L266 and P267 each contribute to the carbamoyl phosphate site.

This sequence belongs to the aspartate/ornithine carbamoyltransferase superfamily. ATCase family. As to quaternary structure, heterododecamer (2C3:3R2) of six catalytic PyrB chains organized as two trimers (C3), and six regulatory PyrI chains organized as three dimers (R2).

The catalysed reaction is carbamoyl phosphate + L-aspartate = N-carbamoyl-L-aspartate + phosphate + H(+). The protein operates within pyrimidine metabolism; UMP biosynthesis via de novo pathway; (S)-dihydroorotate from bicarbonate: step 2/3. In terms of biological role, catalyzes the condensation of carbamoyl phosphate and aspartate to form carbamoyl aspartate and inorganic phosphate, the committed step in the de novo pyrimidine nucleotide biosynthesis pathway. The chain is Aspartate carbamoyltransferase catalytic subunit from Clostridium novyi (strain NT).